An 876-amino-acid polypeptide reads, in one-letter code: Leucine--tRNA ligase (876 aa).

The short motif at 43-53 (PYPSGRIHMGH) is the 'HIGH' region element. The 'KMSKS' region signature appears at 632–636 (KMSKS). Lys-635 contacts ATP.

The protein belongs to the class-I aminoacyl-tRNA synthetase family.

The protein resides in the cytoplasm. It carries out the reaction tRNA(Leu) + L-leucine + ATP = L-leucyl-tRNA(Leu) + AMP + diphosphate. The sequence is that of Leucine--tRNA ligase from Sinorhizobium medicae (strain WSM419) (Ensifer medicae).